The primary structure comprises 964 residues: Probable outer membrane protein PmpE (964 aa).

Positions 1–18 (MKKAFFFFLIGNSLSGLA) are cleaved as a signal peptide. An Autotransporter domain is found at 683–964 (LTPSGHPFWG…YLNGEIALRF (282 aa)).

Belongs to the PMP outer membrane protein family.

Its subcellular location is the secreted. The protein resides in the cell wall. It localises to the cell outer membrane. The polypeptide is Probable outer membrane protein PmpE (pmpE) (Chlamydia trachomatis serovar D (strain ATCC VR-885 / DSM 19411 / UW-3/Cx)).